Reading from the N-terminus, the 160-residue chain is Nucleotide-binding protein Bpet3698 (160 aa).

This sequence belongs to the YajQ family.

Nucleotide-binding protein. The chain is Nucleotide-binding protein Bpet3698 from Bordetella petrii (strain ATCC BAA-461 / DSM 12804 / CCUG 43448).